Consider the following 207-residue polypeptide: dITP/XTP pyrophosphatase (207 aa).

Position 7–12 (7–12 (SNNAKK)) interacts with substrate. D72 acts as the Proton acceptor in catalysis. D72 serves as a coordination point for Mg(2+). Residues S73, 155–158 (FGYD), K183, and 188–189 (HR) each bind substrate.

Belongs to the HAM1 NTPase family. Homodimer. It depends on Mg(2+) as a cofactor.

The enzyme catalyses XTP + H2O = XMP + diphosphate + H(+). It carries out the reaction dITP + H2O = dIMP + diphosphate + H(+). The catalysed reaction is ITP + H2O = IMP + diphosphate + H(+). In terms of biological role, pyrophosphatase that catalyzes the hydrolysis of nucleoside triphosphates to their monophosphate derivatives, with a high preference for the non-canonical purine nucleotides XTP (xanthosine triphosphate), dITP (deoxyinosine triphosphate) and ITP. Seems to function as a house-cleaning enzyme that removes non-canonical purine nucleotides from the nucleotide pool, thus preventing their incorporation into DNA/RNA and avoiding chromosomal lesions. The protein is dITP/XTP pyrophosphatase of Corynebacterium diphtheriae (strain ATCC 700971 / NCTC 13129 / Biotype gravis).